A 464-amino-acid chain; its full sequence is ATP synthase subunit beta (464 aa).

ATP is bound at residue 153–160 (GGAGVGKT).

Belongs to the ATPase alpha/beta chains family. F-type ATPases have 2 components, CF(1) - the catalytic core - and CF(0) - the membrane proton channel. CF(1) has five subunits: alpha(3), beta(3), gamma(1), delta(1), epsilon(1). CF(0) has three main subunits: a(1), b(2) and c(9-12). The alpha and beta chains form an alternating ring which encloses part of the gamma chain. CF(1) is attached to CF(0) by a central stalk formed by the gamma and epsilon chains, while a peripheral stalk is formed by the delta and b chains.

Its subcellular location is the cell inner membrane. It carries out the reaction ATP + H2O + 4 H(+)(in) = ADP + phosphate + 5 H(+)(out). Functionally, produces ATP from ADP in the presence of a proton gradient across the membrane. The catalytic sites are hosted primarily by the beta subunits. This is ATP synthase subunit beta from Burkholderia orbicola (strain MC0-3).